A 97-amino-acid polypeptide reads, in one-letter code: HssA/B-like protein 47 (97 aa).

The segment at Met-1–Asn-33 is disordered.

This sequence belongs to the hssA/B family.

This chain is HssA/B-like protein 47 (hssl47), found in Dictyostelium discoideum (Social amoeba).